A 278-amino-acid polypeptide reads, in one-letter code: Heat stress transcription factor C-2b (278 aa).

Residues 105-114 (AAGGGGGGGG) are compositionally biased toward gly residues. The segment at 105 to 132 (AAGGGGGGGGGKRRDASADGGGGGGDED) is disordered. The interval 143 to 179 (LKQEQRTIDDRVAAMWRRVQETERRPKQMLAFLLKVV) is hydrophobic repeat HR-A/B. The short motif at 219–222 (KRAR) is the Nuclear localization signal element.

This sequence belongs to the HSF family. Class C subfamily. Homotrimer. Post-translationally, exhibits temperature-dependent phosphorylation.

The protein resides in the nucleus. Its function is as follows. Transcriptional regulator that specifically binds DNA of heat shock promoter elements (HSE). The sequence is that of Heat stress transcription factor C-2b (HSFC2B) from Oryza sativa subsp. japonica (Rice).